The chain runs to 1176 residues: 3-hydroxy-3-methylglutaryl-coenzyme A reductase (1176 aa).

Topologically, residues 1-34 (MSLPNHSGSSAFKSFSYIVGTGIKRAAKLSTRNP) are cytoplasmic. The helical transmembrane segment at 35-55 (IEMIVVVLILSSFSYFYLFNL) threads the bilayer. Over 56-299 (ARTSDIFSGT…VKELIDLADN (244 aa)) the chain is Lumenal. N-linked (GlcNAc...) asparagine glycosylation is found at Asn224 and Asn238. Residues 300 to 320 (IDIIVILVGYIMMIATFISLY) traverse the membrane as a helical segment. In terms of domain architecture, SSD spans 301-465 (DIIVILVGYI…FTWYTAVLAL (165 aa)). The Cytoplasmic segment spans residues 321–330 (VNMRAMGSRY). The helical transmembrane segment at 331–351 (TLATAVVFNGFFSFMLALLTV) threads the bilayer. At 352-355 (RALG) the chain is on the lumenal side. The helical transmembrane segment at 356-376 (VDVYPVVLAEAIPFLAVTIGF) threads the bilayer. The Cytoplasmic segment spans residues 377–422 (ERPFKLTKRVFQFSKETPLTKQEIRTTIMRAVDTVALPIARDCFME). The helical transmembrane segment at 423–443 (IIVLVLGAKSGISGLEEFCLL) threads the bilayer. Position 444 (Ser444) is a topological domain, lumenal. Residues 445–465 (AILLAYDFIIMFTWYTAVLAL) traverse the membrane as a helical segment. Residues 466–524 (KLELLRIREINGISADDIKKGTKKSTGYIRRTVIKAFSDDHAAGANTANQKADGPIIGR) lie on the Cytoplasmic side of the membrane. The helical transmembrane segment at 525 to 545 (VKLLMIVGFVVMHIFKFCSAF) threads the bilayer. The Lumenal segment spans residues 546–622 (QSVGPQVNIT…DTYAVYIQHP (77 aa)). N-linked (GlcNAc...) asparagine glycans are attached at residues Asn553 and Asn596. A helical transmembrane segment spans residues 623 to 643 (VISKWLTIALFVSLFLNTYLF). The Cytoplasmic portion of the chain corresponds to 644 to 1176 (NVAKQPKQIV…GTEPGTCIKS (533 aa)). The tract at residues 699 to 724 (PNHKRSHNHHHSHSHSHNHHSNHHQS) is disordered. A compositionally biased stretch (basic residues) spans 700-721 (NHKRSHNHHHSHSHSHNHHSNH). Glu841 acts as the Charge relay system in catalysis. 847–853 (STARGCK) contributes to the CoA binding site. NADP(+)-binding positions include 907–909 (SRF) and 934–942 (DAMGMNMIS). The active-site Charge relay system is Lys972. 1001–1003 (VLK) is a binding site for CoA. Catalysis depends on Asp1048, which acts as the Charge relay system. 1145 to 1146 (AH) lines the CoA pocket. Residue His1146 is the Proton donor of the active site. NADP(+) is bound at residue 1150 to 1151 (NR). The tract at residues 1153-1176 (TQAPTITSGPAPSTGTEPGTCIKS) is disordered.

This sequence belongs to the HMG-CoA reductase family.

The protein resides in the endoplasmic reticulum membrane. The catalysed reaction is (R)-mevalonate + 2 NADP(+) + CoA = (3S)-3-hydroxy-3-methylglutaryl-CoA + 2 NADPH + 2 H(+). The protein operates within metabolic intermediate biosynthesis; (R)-mevalonate biosynthesis; (R)-mevalonate from acetyl-CoA: step 3/3. Functionally, HMG-CoA reductase; part of the first module of ergosterol biosynthesis pathway that includes the early steps of the pathway, conserved across all eukaryotes, and which results in the formation of mevalonate from acetyl-coenzyme A (acetyl-CoA). In this module, the cytosolic acetyl-CoA acetyltransferase catalyzes the formation of acetoacetyl-CoA. The hydroxymethylglutaryl-CoA synthase then condenses acetyl-CoA with acetoacetyl-CoA to form HMG-CoA. The rate-limiting step of the early module is the reduction to mevalonate by the 3-hydroxy-3-methylglutaryl-coenzyme A (HMG-CoA) reductase hmgA. This is 3-hydroxy-3-methylglutaryl-coenzyme A reductase from Phycomyces blakesleeanus (strain ATCC 8743b / DSM 1359 / FGSC 10004 / NBRC 33097 / NRRL 1555).